We begin with the raw amino-acid sequence, 540 residues long: DM7 family protein GD24576 (540 aa).

A disordered region spans residues 416–443; it reads ATDTRGRDEIRTSCDQSQEKDEGSAEAD. Residues 417–443 show a composition bias toward basic and acidic residues; sequence TDTRGRDEIRTSCDQSQEKDEGSAEAD.

It belongs to the DM7 family.

In Drosophila simulans (Fruit fly), this protein is DM7 family protein GD24576.